Here is a 380-residue protein sequence, read N- to C-terminus: MLLSIGMLMLSATQVYTILTVQLFAFLNLLPVEADILAYNFENASQTFEDLPARFGYRLPAEGLKGFLINSKPENACEPIVPPPLKDNSSGTFIVLIRRLDCNFDIKVLNAQRAGYKAAIVHNVDSDDLISMGSNDIDILKKIDIPSVFIGESSANSLKDEFTYEKGGHVILVPELSLPLEYYLIPFLIIVGICLILIVIFMITKFVQDRHRNRRNRLRKDQLKKLPVHKFKKGDEYDVCAICLEEYEDGDKLRILPCSHAYHCKCVDPWLTKTKKTCPVCKQKVVPSQGDSDSDTDSSQEENQVSEHTPLLPPSASARTQSFGSLSESHSHHMTESSDYEDDDNEETDSSDADNEITDHSVVVQLQPNGEPDYNIANTV.

The first 34 residues, 1 to 34 (MLLSIGMLMLSATQVYTILTVQLFAFLNLLPVEA), serve as a signal peptide directing secretion. Residues 35–182 (DILAYNFENA…VPELSLPLEY (148 aa)) lie on the Lumenal side of the membrane. One can recognise a PA domain in the interval 64 to 160 (LKGFLINSKP…GESSANSLKD (97 aa)). N-linked (GlcNAc...) asparagine glycosylation is present at asparagine 88. The helical transmembrane segment at 183 to 203 (YLIPFLIIVGICLILIVIFMI) threads the bilayer. The Cytoplasmic segment spans residues 204–380 (TKFVQDRHRN…EPDYNIANTV (177 aa)). An RING-type; atypical zinc finger spans residues 240–282 (CAICLEEYEDGDKLRILPCSHAYHCKCVDPWLTKTKKTCPVCK). Positions 285 to 380 (VVPSQGDSDS…EPDYNIANTV (96 aa)) are disordered. Acidic residues predominate over residues 338–356 (SDYEDDDNEETDSSDADNE).

In terms of assembly, interacts with ERN1. Autoubiquitinated.

Its subcellular location is the endoplasmic reticulum membrane. It is found in the late endosome membrane. The protein resides in the lysosome membrane. The protein localises to the nucleus inner membrane. The enzyme catalyses S-ubiquitinyl-[E2 ubiquitin-conjugating enzyme]-L-cysteine + [acceptor protein]-L-lysine = [E2 ubiquitin-conjugating enzyme]-L-cysteine + N(6)-ubiquitinyl-[acceptor protein]-L-lysine.. Its pathway is protein modification; protein ubiquitination. In terms of biological role, E3 ubiquitin-protein ligase that regulates cell proliferation. Involved in apoptosis regulation. Mediates ER stress-induced activation of JNK signaling pathway and apoptosis by promoting ERN1 activation and splicing of XBP1 mRNA. Also involved in protein trafficking and localization. This Rattus norvegicus (Rat) protein is E3 ubiquitin-protein ligase RNF13 (Rnf13).